The sequence spans 152 residues: uncharacterized protein (152 aa).

Asn2 carries N-linked (GlcNAc...) asparagine; by host glycosylation. A run of 3 helical transmembrane segments spans residues 5 to 25 (MILL…MNLW), 36 to 56 (LNDF…CYIL), and 68 to 88 (LIIT…QAFI). Residue Asn113 is glycosylated (N-linked (GlcNAc...) asparagine; by host).

The protein localises to the membrane. This is an uncharacterized protein from Acanthamoeba polyphaga mimivirus (APMV).